We begin with the raw amino-acid sequence, 168 residues long: Crossover junction endodeoxyribonuclease RuvC (168 aa).

Catalysis depends on residues Asp-8, Glu-68, and Asp-140. Residues Asp-8, Glu-68, and Asp-140 each coordinate Mg(2+).

It belongs to the RuvC family. As to quaternary structure, homodimer which binds Holliday junction (HJ) DNA. The HJ becomes 2-fold symmetrical on binding to RuvC with unstacked arms; it has a different conformation from HJ DNA in complex with RuvA. In the full resolvosome a probable DNA-RuvA(4)-RuvB(12)-RuvC(2) complex forms which resolves the HJ. It depends on Mg(2+) as a cofactor.

The protein resides in the cytoplasm. The catalysed reaction is Endonucleolytic cleavage at a junction such as a reciprocal single-stranded crossover between two homologous DNA duplexes (Holliday junction).. In terms of biological role, the RuvA-RuvB-RuvC complex processes Holliday junction (HJ) DNA during genetic recombination and DNA repair. Endonuclease that resolves HJ intermediates. Cleaves cruciform DNA by making single-stranded nicks across the HJ at symmetrical positions within the homologous arms, yielding a 5'-phosphate and a 3'-hydroxyl group; requires a central core of homology in the junction. The consensus cleavage sequence is 5'-(A/T)TT(C/G)-3'. Cleavage occurs on the 3'-side of the TT dinucleotide at the point of strand exchange. HJ branch migration catalyzed by RuvA-RuvB allows RuvC to scan DNA until it finds its consensus sequence, where it cleaves and resolves the cruciform DNA. This is Crossover junction endodeoxyribonuclease RuvC from Gluconobacter oxydans (strain 621H) (Gluconobacter suboxydans).